Consider the following 529-residue polypeptide: UDP-glucuronosyltransferase 2B1 (529 aa).

The N-terminal stretch at M1–C23 is a signal peptide. Residues N134 and N316 are each glycosylated (N-linked (GlcNAc...) asparagine). A helical membrane pass occupies residues V494–T510.

It belongs to the UDP-glycosyltransferase family.

It is found in the endoplasmic reticulum membrane. The catalysed reaction is glucuronate acceptor + UDP-alpha-D-glucuronate = acceptor beta-D-glucuronoside + UDP + H(+). It catalyses the reaction 17beta-estradiol + UDP-alpha-D-glucuronate = 17beta-estradiol 17-O-(beta-D-glucuronate) + UDP + H(+). UDP-glucuronosyltransferase (UGT) that catalyzes phase II biotransformation reactions in which lipophilic substrates are conjugated with glucuronic acid to increase the metabolite's water solubility, thereby facilitating excretion into either the urine or bile. Essential for the elimination and detoxification of drugs, xenobiotics and endogenous compounds. Catalyzes the glucuronidation of the endogenous estrogen hormone estradiol. This chain is UDP-glucuronosyltransferase 2B1, found in Rattus norvegicus (Rat).